The chain runs to 515 residues: Histidine ammonia-lyase (515 aa).

A cross-link (5-imidazolinone (Ala-Gly)) is located at residues 142–144; that stretch reads ASG. Ser143 is modified (2,3-didehydroalanine (Ser)).

Belongs to the PAL/histidase family. Contains an active site 4-methylidene-imidazol-5-one (MIO), which is formed autocatalytically by cyclization and dehydration of residues Ala-Ser-Gly.

The protein resides in the cytoplasm. The enzyme catalyses L-histidine = trans-urocanate + NH4(+). It participates in amino-acid degradation; L-histidine degradation into L-glutamate; N-formimidoyl-L-glutamate from L-histidine: step 1/3. In Methylobacterium nodulans (strain LMG 21967 / CNCM I-2342 / ORS 2060), this protein is Histidine ammonia-lyase.